The following is a 66-amino-acid chain: UPF0434 protein Nwi_0075 (66 aa).

It belongs to the UPF0434 family.

This chain is UPF0434 protein Nwi_0075, found in Nitrobacter winogradskyi (strain ATCC 25391 / DSM 10237 / CIP 104748 / NCIMB 11846 / Nb-255).